A 57-amino-acid chain; its full sequence is MFKYTRFEKARIIGARALQISMGAPVLIDVPPGITPLEAAILEFEKGVIPITVIRPS.

Belongs to the archaeal Rpo6/eukaryotic RPB6 RNA polymerase subunit family. Part of the RNA polymerase complex.

Its subcellular location is the cytoplasm. It catalyses the reaction RNA(n) + a ribonucleoside 5'-triphosphate = RNA(n+1) + diphosphate. Its function is as follows. DNA-dependent RNA polymerase (RNAP) catalyzes the transcription of DNA into RNA using the four ribonucleoside triphosphates as substrates. This Pyrococcus furiosus (strain ATCC 43587 / DSM 3638 / JCM 8422 / Vc1) protein is DNA-directed RNA polymerase subunit Rpo6.